A 229-amino-acid chain; its full sequence is 2-phytyl-1,4-naphtoquinone methyltransferase (229 aa).

Belongs to the class I-like SAM-binding methyltransferase superfamily. MenG/UbiE family.

The enzyme catalyses demethylphylloquinol + S-adenosyl-L-methionine = phylloquinol + S-adenosyl-L-homocysteine + H(+). The protein operates within cofactor biosynthesis; phylloquinone biosynthesis. Its function is as follows. Methyltransferase required for the conversion of 2-phytyl-1,4-beta-naphthoquinol to phylloquinol. The chain is 2-phytyl-1,4-naphtoquinone methyltransferase from Nostoc sp. (strain PCC 7120 / SAG 25.82 / UTEX 2576).